Here is a 361-residue protein sequence, read N- to C-terminus: Peptide chain release factor 1 (361 aa).

Glutamine 238 carries the post-translational modification N5-methylglutamine.

This sequence belongs to the prokaryotic/mitochondrial release factor family. In terms of processing, methylated by PrmC. Methylation increases the termination efficiency of RF1.

The protein localises to the cytoplasm. In terms of biological role, peptide chain release factor 1 directs the termination of translation in response to the peptide chain termination codons UAG and UAA. The chain is Peptide chain release factor 1 from Mesomycoplasma hyopneumoniae (strain 232) (Mycoplasma hyopneumoniae).